We begin with the raw amino-acid sequence, 376 residues long: Cyclin-dependent kinase 9-A (376 aa).

Residues 19–319 form the Protein kinase domain; sequence YERLAKIGQG…SDDALNNDFF (301 aa). ATP is bound by residues 25 to 33 and K48; that span reads IGQGTFGEV. The active-site Proton acceptor is D153. Residues 345–376 are disordered; sequence PPRRRGGHMPQQPANQARNPAATNQSEFERVF. Positions 354-369 are enriched in low complexity; that stretch reads PQQPANQARNPAATNQ.

It belongs to the protein kinase superfamily. CMGC Ser/Thr protein kinase family. CDC2/CDKX subfamily. In terms of assembly, associates with cyclin-T to form P-TEFb.

The protein localises to the nucleus. The enzyme catalyses L-seryl-[protein] + ATP = O-phospho-L-seryl-[protein] + ADP + H(+). It carries out the reaction L-threonyl-[protein] + ATP = O-phospho-L-threonyl-[protein] + ADP + H(+). It catalyses the reaction [DNA-directed RNA polymerase] + ATP = phospho-[DNA-directed RNA polymerase] + ADP + H(+). Member of the cyclin-dependent kinase pair (CDK9/cyclin-T) complex, also called positive transcription elongation factor B (P-TEFb), which is proposed to facilitate the transition from abortive to production elongation by phosphorylating the CTD (C-terminal domain) of the large subunit of RNA polymerase II (RNAP II) and SUPT5H. The sequence is that of Cyclin-dependent kinase 9-A (cdk9-a) from Xenopus laevis (African clawed frog).